A 267-amino-acid chain; its full sequence is Nus factor SuhB (267 aa).

Residues Glu-67, Asp-84, and Leu-86 each contribute to the Mg(2+) site. Glu-67 contacts substrate. Substrate contacts are provided by residues 86–89 (LDGT), Arg-183, and Asp-212.

It belongs to the inositol monophosphatase superfamily. In terms of assembly, homodimer. The rRNA transcription and antitermination complex (rrnTAC) consists of RNA polymerase (RNAP), NusA, NusB, NusE (rpsJ), NusG, SubB, ribosomal protein S4, DNA and precursor rRNA; S4 is more flexible than other subunits. Mg(2+) serves as cofactor.

It localises to the cytoplasm. It catalyses the reaction a myo-inositol phosphate + H2O = myo-inositol + phosphate. Part of the processive rRNA transcription and antitermination complex (rrnTAC). The complex forms an RNA-chaperone ring around the RNA exit tunnel of RNA polymerase (RNAP). It supports rapid transcription and antitermination of rRNA operons, cotranscriptional rRNA folding, and annealing of distal rRNA regions to allow correct ribosome biogenesis. This subunit may play a central role in organizing the structure. In Vibrio cholerae serotype O1 (strain ATCC 39315 / El Tor Inaba N16961), this protein is Nus factor SuhB.